The chain runs to 1410 residues: DNA-directed RNA polymerase subunit beta' (1410 aa).

Positions 70, 72, 85, and 88 each coordinate Zn(2+). 3 residues coordinate Mg(2+): aspartate 460, aspartate 462, and aspartate 464. Zn(2+) contacts are provided by cysteine 814, cysteine 888, cysteine 895, and cysteine 898.

The protein belongs to the RNA polymerase beta' chain family. As to quaternary structure, the RNAP catalytic core consists of 2 alpha, 1 beta, 1 beta' and 1 omega subunit. When a sigma factor is associated with the core the holoenzyme is formed, which can initiate transcription. The cofactor is Mg(2+). Requires Zn(2+) as cofactor.

It carries out the reaction RNA(n) + a ribonucleoside 5'-triphosphate = RNA(n+1) + diphosphate. DNA-dependent RNA polymerase catalyzes the transcription of DNA into RNA using the four ribonucleoside triphosphates as substrates. In Shewanella denitrificans (strain OS217 / ATCC BAA-1090 / DSM 15013), this protein is DNA-directed RNA polymerase subunit beta'.